Reading from the N-terminus, the 1535-residue chain is Putative protein TIC 214 C-terminal part (1535 aa).

Disordered stretches follow at residues 264-283 (ENQK…NSND), 312-333 (EQQE…SRKA), and 1263-1282 (DYKE…KNNK).

The protein belongs to the TIC214 family. In terms of assembly, part of the Tic complex.

The protein resides in the plastid. It localises to the chloroplast. In terms of biological role, involved in protein precursor import into chloroplasts. May be part of an intermediate translocation complex acting as a protein-conducting channel at the inner envelope. The polypeptide is Putative protein TIC 214 C-terminal part (Piper cenocladum (Ant piper)).